The primary structure comprises 375 residues: Saccharopine dehydrogenase [NAD(+), L-lysine-forming] (375 aa).

L-saccharopine is bound by residues Arg-18 and Lys-78. The active-site Proton acceptor is the Lys-78. The Proton donor role is filled by His-96. Gln-101 contacts L-saccharopine. Residue Arg-130 coordinates NAD(+). L-saccharopine is bound by residues Arg-131 and Phe-135. NAD(+) is bound by residues 203-204 (GR), Asp-227, Thr-231, Tyr-252, and Val-279. A disulfide bridge links Cys-205 with Cys-250. 280-282 (SAD) is an L-saccharopine binding site. 322–325 (IDHL) serves as a coordination point for NAD(+).

Belongs to the AlaDH/PNT family. In terms of assembly, monomer.

It carries out the reaction L-saccharopine + NAD(+) + H2O = L-lysine + 2-oxoglutarate + NADH + H(+). The protein operates within amino-acid biosynthesis; L-lysine biosynthesis via AAA pathway; L-lysine from L-alpha-aminoadipate (fungal route): step 3/3. Its function is as follows. Catalyzes the NAD(+)-dependent cleavage of saccharopine to L-lysine and 2-oxoglutarate, the final step in the alpha-aminoadipate (AAA) pathway for lysin biosynthesis. This is Saccharopine dehydrogenase [NAD(+), L-lysine-forming] from Emericella nidulans (strain FGSC A4 / ATCC 38163 / CBS 112.46 / NRRL 194 / M139) (Aspergillus nidulans).